We begin with the raw amino-acid sequence, 657 residues long: Glycogen debranching enzyme (657 aa).

Aspartate 334 serves as the catalytic Nucleophile. Glutamate 369 functions as the Proton donor in the catalytic mechanism. The segment at 458 to 485 is disordered; that stretch reads ANGEQNRDGTNSNFSFNHGTEGLEADET. Residues 465–475 show a composition bias toward polar residues; that stretch reads DGTNSNFSFNH.

The protein belongs to the glycosyl hydrolase 13 family.

The protein resides in the cytoplasm. It carries out the reaction Hydrolysis of (1-&gt;6)-alpha-D-glucosidic linkages to branches with degrees of polymerization of three or four glucose residues in limit dextrin.. The protein operates within glycan degradation; glycogen degradation. Its activity is regulated as follows. Slightly activated by Ca(2+). Inhibited by divalent cations such as Zn(2+), Cu(2+), Fe(2+), Mg(2+), Mn(2+), but only slightly inhibited by EDTA. Removes maltotriose and maltotetraose chains that are attached by 1,6-alpha-linkage to the limit dextrin main chain, generating a debranched limit dextrin. Hydrolyzes the alpha-1,6-glycosidic linkages in amylopectin while does not hydrolyze the alpha-1,4-glycosidic linkages in amylose. Native glycogen is a poor substrate. The sequence is that of Glycogen debranching enzyme from Dickeya chrysanthemi (Pectobacterium chrysanthemi).